A 61-amino-acid polypeptide reads, in one-letter code: Small ribosomal subunit protein uS14 (61 aa).

4 residues coordinate Zn(2+): cysteine 24, cysteine 27, cysteine 40, and cysteine 43.

This sequence belongs to the universal ribosomal protein uS14 family. Zinc-binding uS14 subfamily. Part of the 30S ribosomal subunit. Contacts proteins S3 and S10. Zn(2+) serves as cofactor.

Its function is as follows. Binds 16S rRNA, required for the assembly of 30S particles and may also be responsible for determining the conformation of the 16S rRNA at the A site. The protein is Small ribosomal subunit protein uS14 of Chloroflexus aurantiacus (strain ATCC 29364 / DSM 637 / Y-400-fl).